The sequence spans 666 residues: uncharacterized protein (666 aa).

This is an uncharacterized protein from Invertebrate iridescent virus 6 (IIV-6).